A 438-amino-acid chain; its full sequence is Minor capsid protein p49 (438 aa).

It belongs to the asfivirus p49 structural protein family.

The protein resides in the virion. Functionally, together with the penton and the other minor capsid proteins (M1249L, p17), forms a complicated network immediately below the outer capsid shell, stabilizing the whole capsid. Plays an essential role in the formation of infectious virus particles. Especially required for the formation of the capsid vertices. During virion assembly, associates with the membrane and probably mediates the docking of the penton complex to the inner membrane, where it recruits the capsomers to form the penton core. This is Minor capsid protein p49 from Ornithodoros (relapsing fever ticks).